We begin with the raw amino-acid sequence, 112 residues long: Peptidyl-tRNA hydrolase (112 aa).

It belongs to the PTH2 family.

The protein resides in the cytoplasm. The catalysed reaction is an N-acyl-L-alpha-aminoacyl-tRNA + H2O = an N-acyl-L-amino acid + a tRNA + H(+). Functionally, the natural substrate for this enzyme may be peptidyl-tRNAs which drop off the ribosome during protein synthesis. The sequence is that of Peptidyl-tRNA hydrolase from Methanothermobacter thermautotrophicus (strain ATCC 29096 / DSM 1053 / JCM 10044 / NBRC 100330 / Delta H) (Methanobacterium thermoautotrophicum).